A 259-amino-acid polypeptide reads, in one-letter code: 3-dehydroquinate dehydratase (259 aa).

Residues 50 to 52 and arginine 86 each bind 3-dehydroquinate; that span reads EWR. The Proton donor/acceptor role is filled by histidine 147. The active-site Schiff-base intermediate with substrate is lysine 174. 3 residues coordinate 3-dehydroquinate: arginine 216, serine 235, and glutamine 239.

This sequence belongs to the type-I 3-dehydroquinase family. As to quaternary structure, homodimer.

The catalysed reaction is 3-dehydroquinate = 3-dehydroshikimate + H2O. The protein operates within metabolic intermediate biosynthesis; chorismate biosynthesis; chorismate from D-erythrose 4-phosphate and phosphoenolpyruvate: step 3/7. Functionally, involved in the third step of the chorismate pathway, which leads to the biosynthesis of aromatic amino acids. Catalyzes the cis-dehydration of 3-dehydroquinate (DHQ) and introduces the first double bond of the aromatic ring to yield 3-dehydroshikimate. This Geobacillus sp. (strain WCH70) protein is 3-dehydroquinate dehydratase.